A 299-amino-acid chain; its full sequence is UPF0276 protein ABO_1518 (299 aa).

Belongs to the UPF0276 family.

This Alcanivorax borkumensis (strain ATCC 700651 / DSM 11573 / NCIMB 13689 / SK2) protein is UPF0276 protein ABO_1518.